Reading from the N-terminus, the 506-residue chain is ATP synthase subunit alpha (506 aa).

169 to 176 (GDRQTGKT) contacts ATP.

This sequence belongs to the ATPase alpha/beta chains family. As to quaternary structure, F-type ATPases have 2 components, CF(1) - the catalytic core - and CF(0) - the membrane proton channel. CF(1) has five subunits: alpha(3), beta(3), gamma(1), delta(1), epsilon(1). CF(0) has three main subunits: a(1), b(2) and c(9-12). The alpha and beta chains form an alternating ring which encloses part of the gamma chain. CF(1) is attached to CF(0) by a central stalk formed by the gamma and epsilon chains, while a peripheral stalk is formed by the delta and b chains.

The protein localises to the cell membrane. The enzyme catalyses ATP + H2O + 4 H(+)(in) = ADP + phosphate + 5 H(+)(out). Functionally, produces ATP from ADP in the presence of a proton gradient across the membrane. The alpha chain is a regulatory subunit. This Lawsonia intracellularis (strain PHE/MN1-00) protein is ATP synthase subunit alpha.